The following is an 87-amino-acid chain: MENDRGEIVDLYVPRKCSATGRIIKSKDHGSCQITIAKVDENGRAIQGENIIYALSGFVRAMGESDDSLNRLAQRDGLLKAVWNPQR.

Belongs to the eukaryotic ribosomal protein eS21 family. Component of the small ribosomal subunit (SSU). Mature N.crassa ribosomes consist of a small (40S) and a large (60S) subunit. The 40S small subunit contains 1 molecule of ribosomal RNA (18S rRNA) and at least 32 different proteins. The large 60S subunit contains 3 rRNA molecules (26S, 5.8S and 5S rRNA) and at least 42 different proteins.

It localises to the cytoplasm. Its function is as follows. Component of the ribosome, a large ribonucleoprotein complex responsible for the synthesis of proteins in the cell. The small ribosomal subunit (SSU) binds messenger RNAs (mRNAs) and translates the encoded message by selecting cognate aminoacyl-transfer RNA (tRNA) molecules. The large subunit (LSU) contains the ribosomal catalytic site termed the peptidyl transferase center (PTC), which catalyzes the formation of peptide bonds, thereby polymerizing the amino acids delivered by tRNAs into a polypeptide chain. The nascent polypeptides leave the ribosome through a tunnel in the LSU and interact with protein factors that function in enzymatic processing, targeting, and the membrane insertion of nascent chains at the exit of the ribosomal tunnel. The chain is Small ribosomal subunit protein eS21 (crp-7) from Neurospora crassa (strain ATCC 24698 / 74-OR23-1A / CBS 708.71 / DSM 1257 / FGSC 987).